The sequence spans 655 residues: Hepatocyte growth factor activator serine protease (655 aa).

An N-terminal signal peptide occupies residues 1-35 (MGRWAWVPSPWPPPGLGPFLLLLLLLLLLPRGFQP). Residues 36-372 (QPGGNRTESP…RLEACESLTR (337 aa)) constitute a propeptide, removed in mature form. N-linked (GlcNAc...) asparagine glycans are attached at residues Asn40 and Asn48. Residues 64 to 102 (TSETPATSAPEAEGPQSGGLPPPPRAVPSSSSPQAQALT) are disordered. The Fibronectin type-II domain maps to 103–150 (EDGRPCRFPFRYGGRMLHACTSEGSAHRKWCATTHNYDRDRAWGYCVE). Intrachain disulfides connect Cys108/Cys133, Cys122/Cys148, Cys164/Cys175, Cys169/Cys186, Cys188/Cys197, Cys202/Cys230, Cys228/Cys237, Cys245/Cys256, Cys250/Cys267, Cys269/Cys278, Cys286/Cys367, Cys307/Cys349, Cys338/Cys362, Cys394/Cys521, Cys432/Cys448, Cys440/Cys510, Cys535/Cys604, Cys567/Cys583, and Cys594/Cys622. The EGF-like 1 domain occupies 160 to 198 (ALDPCASGPCLNGGSCSNTQDPQSYHCSCPRAFTGKDCG). A Fibronectin type-I domain is found at 200–240 (EKCFDETRYEYLEGGDRWARVRQGHVEQCECFGGRTWCEGT). The 39-residue stretch at 241–279 (RHTACLSSPCLNGGTCHLIVATGTTVCACPPGFAGRLCN) folds into the EGF-like 2 domain. A Kringle domain is found at 286-367 (CFLGNGTGYR…SWEYCRLEAC (82 aa)). N-linked (GlcNAc...) asparagine glycosylation is present at Asn290. The region spanning 408 to 646 (IIGGSSSLPG…YVDWINDRIR (239 aa)) is the Peptidase S1 domain. The active-site Charge relay system is the His447. N-linked (GlcNAc...) asparagine glycosylation is found at Asn468 and Asn492. The Charge relay system role is filled by Asp497. Residue Asn546 is glycosylated (N-linked (GlcNAc...) asparagine). Ser598 serves as the catalytic Charge relay system.

This sequence belongs to the peptidase S1 family. Heterodimer of a short chain and a long chain linked by a disulfide bond. In terms of processing, the active form of HGFAC presents in the serum is derived from the COOH-terminal region of the precursor by the cleavage of bonds between Arg-372 and Val-373 and Arg-407 and Ile-408. In terms of tissue distribution, liver.

It localises to the secreted. Functionally, serine protease that hydrolyzes the inactive zymogen hepatocyte growth factor (HGFsc) to an activated disulfide-linked heterodimer, then initiating hepatocyte growth factor receptor signaling pathway. The polypeptide is Hepatocyte growth factor activator serine protease (Homo sapiens (Human)).